The primary structure comprises 102 residues: NADH-quinone oxidoreductase subunit K (102 aa).

3 helical membrane passes run 5-25, 31-51, and 66-86; these read IAHYLTVSAVLFTLGIFGIFL, IIILMSIELILLAVNLNFIAF, and FVLTVAAAEAAIGLAILVVFF.

The protein belongs to the complex I subunit 4L family. NDH-1 is composed of 14 different subunits. Subunits NuoA, H, J, K, L, M, N constitute the membrane sector of the complex.

Its subcellular location is the cell inner membrane. The enzyme catalyses a quinone + NADH + 5 H(+)(in) = a quinol + NAD(+) + 4 H(+)(out). Its function is as follows. NDH-1 shuttles electrons from NADH, via FMN and iron-sulfur (Fe-S) centers, to quinones in the respiratory chain. The immediate electron acceptor for the enzyme in this species is believed to be ubiquinone. Couples the redox reaction to proton translocation (for every two electrons transferred, four hydrogen ions are translocated across the cytoplasmic membrane), and thus conserves the redox energy in a proton gradient. The protein is NADH-quinone oxidoreductase subunit K of Chelativorans sp. (strain BNC1).